We begin with the raw amino-acid sequence, 393 residues long: Beta-1,4-galactosyltransferase 3 (393 aa).

Topologically, residues 1–10 (MLRRLLERPC) are cytoplasmic. Residues 11–31 (TLALLVGSQLAVMMYLSLGGF) traverse the membrane as a helical; Signal-anchor for type II membrane protein segment. The Lumenal segment spans residues 32 to 393 (RSLSALFGRD…ANHTALRGSH (362 aa)). N-linked (GlcNAc...) asparagine glycosylation is present at asparagine 57. Cysteine 77 and cysteine 119 form a disulfide bridge. 130-134 (PHRAR) serves as a coordination point for UDP-alpha-D-galactose. The N-linked (GlcNAc...) asparagine glycan is linked to asparagine 166. Residues 169–171 (FNR), 196–197 (VD), tyrosine 226, and tryptophan 258 contribute to the UDP-alpha-D-galactose site. An intrachain disulfide couples cysteine 190 to cysteine 209. Mn(2+) is bound at residue aspartate 197. 260-263 (GEDD) provides a ligand contact to N-acetyl-D-glucosamine. Histidine 291 is a binding site for Mn(2+). 291 to 293 (HRG) provides a ligand contact to UDP-alpha-D-galactose. An N-acetyl-D-glucosamine-binding site is contributed by arginine 303. N-linked (GlcNAc...) asparagine glycosylation is found at asparagine 337 and asparagine 385. Positions 339–393 (TADIGTDPRGPRAPSGPRYPPGSSQAFRQEMLQRRPPARPGPLSTANHTALRGSH) are disordered.

It belongs to the glycosyltransferase 7 family. Mn(2+) is required as a cofactor. As to expression, found in various tissues. Highest expression in placenta, prostate, testis, ovary, intestine and muscle, and in fetal brain.

The protein resides in the golgi apparatus. The protein localises to the golgi stack membrane. It carries out the reaction an N-acetyl-beta-D-glucosaminyl derivative + UDP-alpha-D-galactose = a beta-D-galactosyl-(1-&gt;4)-N-acetyl-beta-D-glucosaminyl derivative + UDP + H(+). It catalyses the reaction N-acetyl-D-glucosamine + UDP-alpha-D-galactose = beta-D-galactosyl-(1-&gt;4)-N-acetyl-D-glucosamine + UDP + H(+). The catalysed reaction is a beta-D-GlcNAc-(1-&gt;3)-beta-D-Gal-(1-&gt;4)-beta-D-Glc-(1&lt;-&gt;1)-Cer(d18:1(4E)) + UDP-alpha-D-galactose = a neolactoside nLc4Cer(d18:1(4E)) + UDP + H(+). The enzyme catalyses a beta-D-glucosylceramide + UDP-alpha-D-galactose = a beta-D-galactosyl-(1-&gt;4)-beta-D-glucosyl-(1&lt;-&gt;1)-ceramide + UDP + H(+). It carries out the reaction a neolactoside IV(3)-beta-GlcNAc-nLc4Cer + UDP-alpha-D-galactose = a neolactoside nLc6Cer + UDP + H(+). The protein operates within protein modification; protein glycosylation. In terms of biological role, responsible for the synthesis of complex-type N-linked oligosaccharides in many glycoproteins as well as the carbohydrate moieties of glycolipids. This is Beta-1,4-galactosyltransferase 3 from Homo sapiens (Human).